We begin with the raw amino-acid sequence, 417 residues long: Gamma-glutamyl phosphate reductase (417 aa).

It belongs to the gamma-glutamyl phosphate reductase family.

It localises to the cytoplasm. The enzyme catalyses L-glutamate 5-semialdehyde + phosphate + NADP(+) = L-glutamyl 5-phosphate + NADPH + H(+). The protein operates within amino-acid biosynthesis; L-proline biosynthesis; L-glutamate 5-semialdehyde from L-glutamate: step 2/2. Functionally, catalyzes the NADPH-dependent reduction of L-glutamate 5-phosphate into L-glutamate 5-semialdehyde and phosphate. The product spontaneously undergoes cyclization to form 1-pyrroline-5-carboxylate. The chain is Gamma-glutamyl phosphate reductase from Escherichia coli O8 (strain IAI1).